Consider the following 137-residue polypeptide: Small ribosomal subunit protein uS12 (137 aa).

Residues 1-57 form a disordered region; that stretch reads MPTINQLVRKPRKSKVEKSKSPALNVGYNSHKKVQTNVSSPQKRGVATRVGTMTPKK. At D102 the chain carries 3-methylthioaspartic acid.

This sequence belongs to the universal ribosomal protein uS12 family. In terms of assembly, part of the 30S ribosomal subunit. Contacts proteins S8 and S17. May interact with IF1 in the 30S initiation complex.

With S4 and S5 plays an important role in translational accuracy. Its function is as follows. Interacts with and stabilizes bases of the 16S rRNA that are involved in tRNA selection in the A site and with the mRNA backbone. Located at the interface of the 30S and 50S subunits, it traverses the body of the 30S subunit contacting proteins on the other side and probably holding the rRNA structure together. The combined cluster of proteins S8, S12 and S17 appears to hold together the shoulder and platform of the 30S subunit. The chain is Small ribosomal subunit protein uS12 from Streptococcus pneumoniae serotype 2 (strain D39 / NCTC 7466).